The primary structure comprises 166 residues: uncharacterized protein (166 aa).

The tract at residues 1–58 (MSSEITEGDLQKFHDEHFNAKAVNLWNVAFAQNDRGGNSESANVEYTQSVERYPDGTI) is may interact with smn1.

Part of the core SMN complex at least composed of smn1, yip11/gem2, gem6, gem7 and gem8. Interacts with smn1; the interaction is direct. Interacts with gem7; the interaction is direct.

The protein resides in the cytoplasm. It localises to the nucleus. In terms of biological role, the SMN complex catalyzes the assembly of small nuclear ribonucleoproteins (snRNPs), the building blocks of the spliceosome, and thereby plays an important role in the splicing of cellular pre-mRNAs. Most spliceosomal snRNPs contain a common set of Sm proteins SNRPB, SNRPD1, SNRPD2, SNRPD3, SNRPE, SNRPF and SNRPG that assemble in a heptameric protein ring on the Sm site of the small nuclear RNA to form the core snRNP (Sm core). In the cytosol, the Sm proteins SNRPD1, SNRPD2, SNRPE, SNRPF and SNRPG are trapped in an inactive 6S pICln-Sm complex by the chaperone CLNS1A that controls the assembly of the core snRNP. To assemble core snRNPs, the SMN complex accepts the trapped 5Sm proteins from CLNS1A forming an intermediate. Binding of snRNA inside 5Sm triggers eviction of the SMN complex, thereby allowing binding of SNRPD3 and SNRPB to complete assembly of the core snRNP. This is an uncharacterized protein from Schizosaccharomyces pombe (strain 972 / ATCC 24843) (Fission yeast).